The following is a 418-amino-acid chain: Gamma-glutamyl phosphate reductase (418 aa).

This sequence belongs to the gamma-glutamyl phosphate reductase family.

It localises to the cytoplasm. The catalysed reaction is L-glutamate 5-semialdehyde + phosphate + NADP(+) = L-glutamyl 5-phosphate + NADPH + H(+). The protein operates within amino-acid biosynthesis; L-proline biosynthesis; L-glutamate 5-semialdehyde from L-glutamate: step 2/2. Catalyzes the NADPH-dependent reduction of L-glutamate 5-phosphate into L-glutamate 5-semialdehyde and phosphate. The product spontaneously undergoes cyclization to form 1-pyrroline-5-carboxylate. The sequence is that of Gamma-glutamyl phosphate reductase from Clostridium kluyveri (strain NBRC 12016).